A 28-amino-acid polypeptide reads, in one-letter code: fur leader peptide (28 aa).

Cotranscribed with fur, it is essential for fur translation. The fur ribosomal binding site (RBS) is occluded by the 5'-mRNA secondary structure, which is opened by uof translation. The protein is fur leader peptide (uof) of Escherichia coli (strain K12).